The following is a 458-amino-acid chain: Transcription termination factor Rho (458 aa).

Residues 1–23 are disordered; that stretch reads MNTTNKESTAELNNTESNNNYNN. Over residues 10–23 the composition is skewed to low complexity; that stretch reads AELNNTESNNNYNN. The 76-residue stretch at 78-153 folds into the Rho RNA-BD domain; the sequence is LIVGEGVLEV…LKVNRVNFED (76 aa). Residues 201–206, 213–218, and R244 each bind ATP; these read GKGQRA and RTGKTV.

This sequence belongs to the Rho family. Homohexamer. The homohexamer assembles into an open ring structure.

Its function is as follows. Facilitates transcription termination by a mechanism that involves Rho binding to the nascent RNA, activation of Rho's RNA-dependent ATPase activity, and release of the mRNA from the DNA template. The sequence is that of Transcription termination factor Rho from Rickettsia conorii (strain ATCC VR-613 / Malish 7).